The chain runs to 443 residues: UDP-N-acetylmuramoylalanine--D-glutamate ligase (443 aa).

Residue 116–122 (GTNGKST) participates in ATP binding.

This sequence belongs to the MurCDEF family.

Its subcellular location is the cytoplasm. The catalysed reaction is UDP-N-acetyl-alpha-D-muramoyl-L-alanine + D-glutamate + ATP = UDP-N-acetyl-alpha-D-muramoyl-L-alanyl-D-glutamate + ADP + phosphate + H(+). Its pathway is cell wall biogenesis; peptidoglycan biosynthesis. Functionally, cell wall formation. Catalyzes the addition of glutamate to the nucleotide precursor UDP-N-acetylmuramoyl-L-alanine (UMA). In Novosphingobium aromaticivorans (strain ATCC 700278 / DSM 12444 / CCUG 56034 / CIP 105152 / NBRC 16084 / F199), this protein is UDP-N-acetylmuramoylalanine--D-glutamate ligase.